A 355-amino-acid polypeptide reads, in one-letter code: Peptide chain release factor 1 (355 aa).

N5-methylglutamine is present on Gln233. Over residues 280–293 the composition is skewed to basic and acidic residues; sequence ERRKKEQERADSRR. A disordered region spans residues 280–308; the sequence is ERRKKEQERADSRRGQVGSGDRSERIRTY.

This sequence belongs to the prokaryotic/mitochondrial release factor family. Post-translationally, methylated by PrmC. Methylation increases the termination efficiency of RF1.

The protein localises to the cytoplasm. Functionally, peptide chain release factor 1 directs the termination of translation in response to the peptide chain termination codons UAG and UAA. This is Peptide chain release factor 1 from Rickettsia peacockii (strain Rustic).